The chain runs to 196 residues: Proteasome subunit beta 1 (196 aa).

A propeptide spans 1–6 (MEELPA) (removed in mature form; by autocatalysis). The Nucleophile role is filled by T7.

The protein belongs to the peptidase T1B family. As to quaternary structure, the 20S proteasome core is composed of 14 alpha and 14 beta subunits that assemble into four stacked heptameric rings, resulting in a barrel-shaped structure. The two inner rings, each composed of seven catalytic beta subunits, are sandwiched by two outer rings, each composed of seven alpha subunits. The catalytic chamber with the active sites is on the inside of the barrel. Has a gated structure, the ends of the cylinder being occluded by the N-termini of the alpha-subunits. Is capped at one or both ends by the proteasome regulatory ATPase, PAN.

The protein resides in the cytoplasm. The enzyme catalyses Cleavage of peptide bonds with very broad specificity.. The formation of the proteasomal ATPase PAN-20S proteasome complex, via the docking of the C-termini of PAN into the intersubunit pockets in the alpha-rings, triggers opening of the gate for substrate entry. Interconversion between the open-gate and close-gate conformations leads to a dynamic regulation of the 20S proteasome proteolysis activity. In terms of biological role, component of the proteasome core, a large protease complex with broad specificity involved in protein degradation. This is Proteasome subunit beta 1 from Saccharolobus solfataricus (strain ATCC 35092 / DSM 1617 / JCM 11322 / P2) (Sulfolobus solfataricus).